The following is a 210-amino-acid chain: Redox-sensing transcriptional repressor Rex (210 aa).

Residues 17–56 constitute a DNA-binding region (H-T-H motif); sequence KYHRYLGDLLDRDIQRISSKELSDIIGFTASQIRQDLNNF. 91 to 96 provides a ligand contact to NAD(+); the sequence is GAGNLG.

This sequence belongs to the transcriptional regulatory Rex family. In terms of assembly, homodimer.

It is found in the cytoplasm. Functionally, modulates transcription in response to changes in cellular NADH/NAD(+) redox state. This chain is Redox-sensing transcriptional repressor Rex, found in Clostridioides difficile (strain 630) (Peptoclostridium difficile).